A 505-amino-acid polypeptide reads, in one-letter code: Alpha-1-syntrophin (505 aa).

2 disordered regions span residues 1–25 (MASGRRAPRTGLLELRAGAGSGAGG) and 40–77 (LTVSPADGDPGPEPGAPREQEPAQLNGAAEPGAGPPQL). 2 PH domains span residues 6–269 (RAPR…AQVN) and 293–401 (DIKQ…DGCH). A PDZ domain is found at 87–170 (RVTVRKADAG…EVVLEVKYMK (84 aa)). A phosphoserine mark is found at Ser101, Ser184, Ser189, Ser193, and Ser200. A disordered region spans residues 180 to 210 (TGGTSVGWDSPPASPLQRQPSSPGPTPRNFS). Residues 449-505 (PFEKLQMSSDDGASLLFLDFGGAEGEIQLDLHSCPKTIVFIIHSFLSAKVTRLGLLA) enclose the SU domain. The calmodulin-binding stretch occupies residues 483-505 (PKTIVFIIHSFLSAKVTRLGLLA).

The protein belongs to the syntrophin family. In terms of assembly, monomer and homodimer. Interacts with the other members of the syntrophin family SNTB1 and SNTB2; SGCG and SGCA of the dystrophin glycoprotein complex; NOS1; GRB2; the sodium channel proteins SCN4A and SCN5A; F-actin and calmodulin. Interacts with dystrophin protein DMD and related proteins DTNA and UTRN and with MAPK12, TGFA and GA. Interacts with MYOC; regulates muscle hypertrophy. Interacts with DTNB. In terms of processing, phosphorylated by CaM-kinase II. Phosphorylation may inhibit the interaction with DMD. High expression in skeletal muscle and heart. Low expression in brain, pancreas, liver, kidney and lung. Not detected in placenta.

The protein localises to the cell membrane. It is found in the sarcolemma. The protein resides in the cell junction. Its subcellular location is the cytoplasm. It localises to the cytoskeleton. Adapter protein that binds to and probably organizes the subcellular localization of a variety of membrane proteins. May link various receptors to the actin cytoskeleton and the extracellular matrix via the dystrophin glycoprotein complex. Plays an important role in synapse formation and in the organization of UTRN and acetylcholine receptors at the neuromuscular synapse. Binds to phosphatidylinositol 4,5-bisphosphate. The sequence is that of Alpha-1-syntrophin (SNTA1) from Homo sapiens (Human).